The chain runs to 211 residues: Protein-L-isoaspartate O-methyltransferase (211 aa).

Serine 59 is a catalytic residue.

Belongs to the methyltransferase superfamily. L-isoaspartyl/D-aspartyl protein methyltransferase family.

It localises to the cytoplasm. It carries out the reaction [protein]-L-isoaspartate + S-adenosyl-L-methionine = [protein]-L-isoaspartate alpha-methyl ester + S-adenosyl-L-homocysteine. Its function is as follows. Catalyzes the methyl esterification of L-isoaspartyl residues in peptides and proteins that result from spontaneous decomposition of normal L-aspartyl and L-asparaginyl residues. It plays a role in the repair and/or degradation of damaged proteins. The chain is Protein-L-isoaspartate O-methyltransferase from Ignicoccus hospitalis (strain KIN4/I / DSM 18386 / JCM 14125).